We begin with the raw amino-acid sequence, 473 residues long: 3-isopropylmalate dehydratase large subunit (473 aa).

Residues C354, C414, and C417 each coordinate [4Fe-4S] cluster.

This sequence belongs to the aconitase/IPM isomerase family. LeuC type 1 subfamily. Heterodimer of LeuC and LeuD. Requires [4Fe-4S] cluster as cofactor.

The catalysed reaction is (2R,3S)-3-isopropylmalate = (2S)-2-isopropylmalate. It participates in amino-acid biosynthesis; L-leucine biosynthesis; L-leucine from 3-methyl-2-oxobutanoate: step 2/4. Catalyzes the isomerization between 2-isopropylmalate and 3-isopropylmalate, via the formation of 2-isopropylmaleate. This is 3-isopropylmalate dehydratase large subunit from Rhodopseudomonas palustris (strain BisB18).